A 618-amino-acid chain; its full sequence is 1-deoxy-D-xylulose-5-phosphate synthase (618 aa).

Thiamine diphosphate-binding positions include His75 and 116–118 (GHS). Residue Asp147 coordinates Mg(2+). Thiamine diphosphate-binding positions include 148–149 (GA), Asn176, Tyr283, and Glu364. Asn176 contacts Mg(2+).

This sequence belongs to the transketolase family. DXPS subfamily. As to quaternary structure, homodimer. It depends on Mg(2+) as a cofactor. Thiamine diphosphate is required as a cofactor.

The catalysed reaction is D-glyceraldehyde 3-phosphate + pyruvate + H(+) = 1-deoxy-D-xylulose 5-phosphate + CO2. The protein operates within metabolic intermediate biosynthesis; 1-deoxy-D-xylulose 5-phosphate biosynthesis; 1-deoxy-D-xylulose 5-phosphate from D-glyceraldehyde 3-phosphate and pyruvate: step 1/1. Catalyzes the acyloin condensation reaction between C atoms 2 and 3 of pyruvate and glyceraldehyde 3-phosphate to yield 1-deoxy-D-xylulose-5-phosphate (DXP). The chain is 1-deoxy-D-xylulose-5-phosphate synthase from Thiobacillus denitrificans (strain ATCC 25259 / T1).